The primary structure comprises 114 residues: Replication initiation control protein YabA (114 aa).

Zn(2+) contacts are provided by His-79, Cys-81, Cys-95, and Cys-98.

This sequence belongs to the YabA family. In terms of assembly, homotetramer. Interacts with both DnaA and DnaN, acting as a bridge between these two proteins. Requires Zn(2+) as cofactor.

The protein resides in the cytoplasm. It localises to the nucleoid. In terms of biological role, involved in control of chromosome replication initiation. Inhibits the cooperative binding of DnaA to the oriC region, thus negatively regulating initiation of chromosome replication. Inhibits the ability of DnaA-ATP to form a helix on DNA; does not disassemble preformed DnaA-DNA helices. Decreases the residence time of DnaA on the chromosome at its binding sites (oriC, replication forks and promoter-binding sites). Tethers DnaA to the replication machinery via the DNA polymerase beta sliding clamp subunit (dnaN). Associates with oriC and other DnaA targets on the chromosome in a DnaA-dependent manner. This is Replication initiation control protein YabA from Lactobacillus gasseri (strain ATCC 33323 / DSM 20243 / BCRC 14619 / CIP 102991 / JCM 1131 / KCTC 3163 / NCIMB 11718 / NCTC 13722 / AM63).